Consider the following 358-residue polypeptide: Trans-anol O-methyltransferase 1 (358 aa).

Positions 201, 224, 244, 245, and 259 each coordinate S-adenosyl-L-methionine. Catalysis depends on His262, which acts as the Proton acceptor.

It belongs to the class I-like SAM-binding methyltransferase superfamily. Cation-independent O-methyltransferase family. COMT subfamily. Highly expressed in developing fruits. Expressed at low levels in roots, young leaves, buds and flowers.

It catalyses the reaction (E)-anol + S-adenosyl-L-methionine = (E)-anethole + S-adenosyl-L-homocysteine + H(+). The catalysed reaction is (E)-isoeugenol + S-adenosyl-L-methionine = (E)-isomethyleugenol + S-adenosyl-L-homocysteine + H(+). The protein operates within aromatic compound metabolism; phenylpropanoid biosynthesis. Its activity is regulated as follows. Inhibited by zinc and copper. Its function is as follows. Phenylpropene O-methyltransferase that catalyzes the conversion of trans-anol to trans-anethole and isoeugenol to isomethyleugenol. Phenylpropenes are the primary constituents of various essential plant oils. They are produced as antimicrobial and antianimal compounds, or as floral attractants of pollinators. The polypeptide is Trans-anol O-methyltransferase 1 (AIMT1) (Pimpinella anisum (Anise)).